Reading from the N-terminus, the 344-residue chain is N-acetyl-gamma-glutamyl-phosphate reductase (344 aa).

Cys-150 is a catalytic residue.

The protein belongs to the NAGSA dehydrogenase family. Type 1 subfamily.

Its subcellular location is the cytoplasm. It catalyses the reaction N-acetyl-L-glutamate 5-semialdehyde + phosphate + NADP(+) = N-acetyl-L-glutamyl 5-phosphate + NADPH + H(+). Its pathway is amino-acid biosynthesis; L-arginine biosynthesis; N(2)-acetyl-L-ornithine from L-glutamate: step 3/4. Catalyzes the NADPH-dependent reduction of N-acetyl-5-glutamyl phosphate to yield N-acetyl-L-glutamate 5-semialdehyde. The sequence is that of N-acetyl-gamma-glutamyl-phosphate reductase from Pseudomonas savastanoi pv. phaseolicola (strain 1448A / Race 6) (Pseudomonas syringae pv. phaseolicola (strain 1448A / Race 6)).